The sequence spans 178 residues: Large ribosomal subunit protein uL6 (178 aa).

Belongs to the universal ribosomal protein uL6 family. As to quaternary structure, part of the 50S ribosomal subunit.

In terms of biological role, this protein binds to the 23S rRNA, and is important in its secondary structure. It is located near the subunit interface in the base of the L7/L12 stalk, and near the tRNA binding site of the peptidyltransferase center. The polypeptide is Large ribosomal subunit protein uL6 (Geobacillus kaustophilus (strain HTA426)).